We begin with the raw amino-acid sequence, 465 residues long: Ribosomal oxygenase 2 (465 aa).

Residues 139-271 enclose the JmjC domain; the sequence is QPQRFKDELW…NSWGDYLLDS (133 aa). Positions 179, 181, and 240 each coordinate Fe cation. Residue S309 is modified to Phosphoserine.

It belongs to the ROX family. MINA53 subfamily. Requires Fe(2+) as cofactor.

The protein resides in the nucleus. The protein localises to the nucleolus. The enzyme catalyses L-histidyl-[ribosomal protein uL15] + 2-oxoglutarate + O2 = (3S)-3-hydroxy-L-histidyl-[ribosomal protein uL15] + succinate + CO2. It catalyses the reaction L-histidyl-[protein] + 2-oxoglutarate + O2 = (3S)-3-hydroxy-L-histidyl-[protein] + succinate + CO2. Functionally, oxygenase that can act as both a histone lysine demethylase and a ribosomal histidine hydroxylase. Is involved in the demethylation of trimethylated 'Lys-9' on histone H3 (H3K9me3), leading to an increase in ribosomal RNA expression. Also catalyzes the hydroxylation of 60S ribosomal protein L27a on 'His-39'. May play an important role in cell growth and survival. May be involved in ribosome biogenesis, most likely during the assembly process of pre-ribosomal particles. This chain is Ribosomal oxygenase 2, found in Rattus norvegicus (Rat).